The primary structure comprises 61 residues: Antimicrobial peptide 1 (61 aa).

The signal sequence occupies residues 1–24 (LPVAFLKFAIVLILFIAMSAMIEA). Position 25 is a pyrrolidone carboxylic acid (Q25). Cystine bridges form between C26–C43, C33–C47, and C42–C58.

It belongs to the AMP family. Homodimer. Three disulfide bonds are present. As to expression, found only in seeds.

It localises to the secreted. Its function is as follows. Possesses antifungal activity and is also active on two tested Gram-positive bacteria but is non-toxic for Gram-negative bacteria and cultured human cells. The protein is Antimicrobial peptide 1 (AMP1) of Mirabilis jalapa (Garden four-o'clock).